Here is a 107-residue protein sequence, read N- to C-terminus: UPF0145 protein BVU_2335 (107 aa).

Belongs to the UPF0145 family.

This is UPF0145 protein BVU_2335 from Phocaeicola vulgatus (strain ATCC 8482 / DSM 1447 / JCM 5826 / CCUG 4940 / NBRC 14291 / NCTC 11154) (Bacteroides vulgatus).